We begin with the raw amino-acid sequence, 480 residues long: Argininosuccinate lyase (480 aa).

Residues 1–17 (MTDTTPSADLGASSQQP) show a composition bias toward polar residues. The segment at 1-24 (MTDTTPSADLGASSQQPAKAWSGR) is disordered.

The protein belongs to the lyase 1 family. Argininosuccinate lyase subfamily.

The protein resides in the cytoplasm. It catalyses the reaction 2-(N(omega)-L-arginino)succinate = fumarate + L-arginine. It participates in amino-acid biosynthesis; L-arginine biosynthesis; L-arginine from L-ornithine and carbamoyl phosphate: step 3/3. This Azoarcus sp. (strain BH72) protein is Argininosuccinate lyase.